Consider the following 228-residue polypeptide: 2,3-bisphosphoglycerate-dependent phosphoglycerate mutase (228 aa).

Residues 8-15, 21-22, Arg60, 87-90, Lys98, 114-115, and 183-184 contribute to the substrate site; these read RHGQSEWN, TG, ERHY, RR, and GN. His9 functions as the Tele-phosphohistidine intermediate in the catalytic mechanism. Catalysis depends on Glu87, which acts as the Proton donor/acceptor.

It belongs to the phosphoglycerate mutase family. BPG-dependent PGAM subfamily.

It carries out the reaction (2R)-2-phosphoglycerate = (2R)-3-phosphoglycerate. The protein operates within carbohydrate degradation; glycolysis; pyruvate from D-glyceraldehyde 3-phosphate: step 3/5. In terms of biological role, catalyzes the interconversion of 2-phosphoglycerate and 3-phosphoglycerate. In Staphylococcus aureus (strain MRSA252), this protein is 2,3-bisphosphoglycerate-dependent phosphoglycerate mutase.